Reading from the N-terminus, the 243-residue chain is Voltage-gated monoatomic cation channel TMEM109 (243 aa).

An N-terminal signal peptide occupies residues 1-33; it reads MAGAHSNPSWSRHLFKAVLMVLGALLLVHSASA. At 34-83 the chain is on the lumenal side; sequence QTHREFASPGQQKRESSADILTEIGRSLKETLDTWLGPETMHVISETLLQ. Residues 84 to 104 traverse the membrane as a helical segment; the sequence is VMWAISSAISVACFALSGIAA. Topologically, residues 105–135 are cytoplasmic; it reads QLLSALGLDGEQLTQVLKLSPSQVQTLLLWG. A helical transmembrane segment spans residues 136 to 156; it reads AAALVIYWLLSLLLGLVLALL. Residues 157-185 lie on the Lumenal side of the membrane; that stretch reads GRILGGLKLVLFVAGFVGLVRSVPDPSTR. The chain crosses the membrane as a helical span at residues 186–205; the sequence is ALLLLALLTVFALLSRLTGS. The Cytoplasmic portion of the chain corresponds to 206 to 243; the sequence is RSSGTHLEAKVRGLERQIEELRGRQRRAAKIPRSMEEE.

As to quaternary structure, homooligomer. Interacts with CRYAB; in the cellular response to DNA damage.

The protein localises to the nucleus outer membrane. The protein resides in the endoplasmic reticulum membrane. It is found in the sarcoplasmic reticulum membrane. The enzyme catalyses K(+)(in) = K(+)(out). The catalysed reaction is Ca(2+)(in) = Ca(2+)(out). Functionally, functions as a voltage-gated monoatomic cation channel permeable to both potassium and calcium. Plays a role in the cellular response to DNA damage. This is Voltage-gated monoatomic cation channel TMEM109 from Rattus norvegicus (Rat).